The following is a 259-amino-acid chain: 7-cyano-7-deazaguanine synthase (259 aa).

32–42 lines the ATP pocket; that stretch reads LSGGLDSVTCL. Residues Cys223, Cys233, Cys236, and Cys239 each coordinate Zn(2+).

Belongs to the QueC family. It depends on Zn(2+) as a cofactor.

The catalysed reaction is 7-carboxy-7-deazaguanine + NH4(+) + ATP = 7-cyano-7-deazaguanine + ADP + phosphate + H2O + H(+). It functions in the pathway purine metabolism; 7-cyano-7-deazaguanine biosynthesis. Its function is as follows. Catalyzes the ATP-dependent conversion of 7-carboxy-7-deazaguanine (CDG) to 7-cyano-7-deazaguanine (preQ(0)). The sequence is that of 7-cyano-7-deazaguanine synthase from Psychrobacter arcticus (strain DSM 17307 / VKM B-2377 / 273-4).